Here is a 223-residue protein sequence, read N- to C-terminus: Pyridoxine/pyridoxamine 5'-phosphate oxidase (223 aa).

Residues 13–16 (RKNY) and Lys73 each bind substrate. FMN is bound by residues 68–73 (RIVLLK), 83–84 (YT), Lys90, and Gln112. Tyr130, Arg134, and Ser138 together coordinate substrate. FMN contacts are provided by residues 147–148 (QS) and Trp193. Residue 199 to 201 (RLH) participates in substrate binding. Position 203 (Arg203) interacts with FMN.

This sequence belongs to the pyridoxamine 5'-phosphate oxidase family. Homodimer. FMN serves as cofactor.

The catalysed reaction is pyridoxamine 5'-phosphate + O2 + H2O = pyridoxal 5'-phosphate + H2O2 + NH4(+). It carries out the reaction pyridoxine 5'-phosphate + O2 = pyridoxal 5'-phosphate + H2O2. The protein operates within cofactor metabolism; pyridoxal 5'-phosphate salvage; pyridoxal 5'-phosphate from pyridoxamine 5'-phosphate: step 1/1. It functions in the pathway cofactor metabolism; pyridoxal 5'-phosphate salvage; pyridoxal 5'-phosphate from pyridoxine 5'-phosphate: step 1/1. Catalyzes the oxidation of either pyridoxine 5'-phosphate (PNP) or pyridoxamine 5'-phosphate (PMP) into pyridoxal 5'-phosphate (PLP). This Rhodopirellula baltica (strain DSM 10527 / NCIMB 13988 / SH1) protein is Pyridoxine/pyridoxamine 5'-phosphate oxidase.